A 153-amino-acid polypeptide reads, in one-letter code: MTHDNKLQVEAIKRGTVIDHIPAQIGFKLLTLFKLTETDQRITIGLNLPSGEMGRKDLIKIENTFLTDEQVNQLSLYAPDATVNRIDDYEVVGKSRPNLPERIDTVLVCPNSNCISHAEPVSSSFAVKKREKDIALKCKYCEKEFSHYVVLAN.

Zn(2+)-binding residues include Cys-109, Cys-114, Cys-138, and Cys-141.

This sequence belongs to the PyrI family. Contains catalytic and regulatory chains. Zn(2+) is required as a cofactor.

Its function is as follows. Involved in allosteric regulation of aspartate carbamoyltransferase. The chain is Aspartate carbamoyltransferase regulatory chain from Enterobacter sp. (strain 638).